A 178-amino-acid chain; its full sequence is MTQLSSNDVPSMGRRQFMNLLTFGTATGVALGALYPVANYFMPLRAGGGGGGTSAKDELGNPITKTGWLATHQAGDRSLVQGLKGDPTYLIVNEVGEIGEFGLNAICTHLGCVVPWDSGANKFICPCHGSQYDTNGKVVRGPAPLSLALAHVDIEDDAVLVKQWSETDFRTNENPWWA.

Residues 20–42 traverse the membrane as a helical segment; the sequence is LLTFGTATGVALGALYPVANYFM. Positions 65 to 161 constitute a Rieske domain; that stretch reads KTGWLATHQA…VDIEDDAVLV (97 aa). Residues cysteine 107, histidine 109, cysteine 125, and histidine 128 each contribute to the [2Fe-2S] cluster site. Residues cysteine 112 and cysteine 127 are joined by a disulfide bond.

The protein belongs to the Rieske iron-sulfur protein family. In terms of assembly, the 4 large subunits of the cytochrome b6-f complex are cytochrome b6, subunit IV (17 kDa polypeptide, PetD), cytochrome f and the Rieske protein, while the 4 small subunits are PetG, PetL, PetM and PetN. The complex functions as a dimer. The cofactor is [2Fe-2S] cluster.

It is found in the cellular thylakoid membrane. It catalyses the reaction 2 oxidized [plastocyanin] + a plastoquinol + 2 H(+)(in) = 2 reduced [plastocyanin] + a plastoquinone + 4 H(+)(out). Its function is as follows. Component of the cytochrome b6-f complex, which mediates electron transfer between photosystem II (PSII) and photosystem I (PSI), cyclic electron flow around PSI, and state transitions. In Prochlorococcus marinus (strain MIT 9301), this protein is Cytochrome b6-f complex iron-sulfur subunit.